We begin with the raw amino-acid sequence, 309 residues long: Probable pathogenesis-related protein ARB_02861 (309 aa).

Residues 1–17 form the signal peptide; sequence MKSSVLMTALCVAGSLA. A compositionally biased stretch (low complexity) spans 47 to 59; the sequence is CPTVIPTTSYKPE. The tract at residues 47 to 152 is disordered; that stretch reads CPTVIPTTSY…PPPPGKDYKE (106 aa). Composition is skewed to pro residues over residues 61–92 and 99–147; these read TSKP…PCPE and APPP…PPPG. The 131-residue stretch at 154–284 folds into the SCP domain; the sequence is AGYHHNVHRS…GDAYYTVCNY (131 aa). The N-linked (GlcNAc...) asparagine glycan is linked to Asn164.

The protein belongs to the CRISP family.

The protein resides in the secreted. Secreted protein required for efficient export of lipids such as acetylated sterols. Acts in detoxification of hydrophobic compounds. The sequence is that of Probable pathogenesis-related protein ARB_02861 from Arthroderma benhamiae (strain ATCC MYA-4681 / CBS 112371) (Trichophyton mentagrophytes).